The chain runs to 468 residues: Procollagen C-endopeptidase enhancer 1 (468 aa).

The first 24 residues, Met1 to Gly24, serve as a signal peptide directing secretion. Asn28 is a glycosylation site (N-linked (GlcNAc...) asparagine). 4 cysteine pairs are disulfide-bonded: Cys36–Cys62, Cys89–Cys111, Cys158–Cys185, and Cys212–Cys235. 2 CUB domains span residues Cys36–Arg148 and Cys158–Leu272. Thr41 is modified (phosphothreonine). Position 49 is a phosphoserine (Ser49). The disordered stretch occupies residues Thr271–Cys341. The segment covering Leu272–Ser281 has biased composition (basic and acidic residues). Intrachain disulfides connect Cys341/Cys409 and Cys356/Cys460. The NTR domain occupies Cys341–Cys460. Asn454 carries an N-linked (GlcNAc...) asparagine glycan.

As to quaternary structure, interacts with EFEMP2. In terms of tissue distribution, expressed at highest levels in collagen-rich tissues, especially tendon. Also expressed in cornea and sterna.

The protein resides in the secreted. Binds to the C-terminal propeptide of type I procollagen and enhances procollagen C-proteinase activity. The polypeptide is Procollagen C-endopeptidase enhancer 1 (Pcolce) (Rattus norvegicus (Rat)).